The primary structure comprises 874 residues: AP-1 complex subunit gamma-1 (874 aa).

The 113-residue stretch at 761 to 873 folds into the GAE domain; the sequence is TVAKSHTVYT…QDQTDWAQPS (113 aa).

Belongs to the adaptor complexes large subunit family. As to quaternary structure, adaptor protein complex 1 (AP-1) is a heterotetramer composed of two large adaptins (gamma-type subunit APL4 and beta-type subunit APL2), a medium adaptin (mu-type subunit APM1) and a small adaptin (sigma-type subunit APS1). AP-1 interacts with clathrin.

The protein localises to the cytoplasmic vesicle. Its subcellular location is the clathrin-coated vesicle membrane. The protein resides in the golgi apparatus. In terms of biological role, adaptins are components of the adaptor complexes which link clathrin to receptors in coated vesicles. Clathrin-associated protein complexes are believed to interact with the cytoplasmic tails of membrane proteins, leading to their selection and concentration. The AP-1 complex interacts directly with clathrin. Required for apical growth extension. This Mycosarcoma maydis (Corn smut fungus) protein is AP-1 complex subunit gamma-1 (APL4).